Consider the following 502-residue polypeptide: MGVENTKQTMSSQNIKPAKDSDDVLHTQFKEVKRSPMRYTMQLLAALAVSMASLMIGYSSSYTSPALVSMRDNTTATFEVTMDMAMWIGSIMPLSALIGGIIGGPCIEYIGRRNTILSTALPFLAGWLFIALATNVAMILVGRSICGFCVGVASLSLPVYLGESIQPEVRGSLGLLPTVFGNSGILMCFTAGMYLAWRNLALLGACIPIIFLILMFLIPETPRWYISKGKIKEARKSLQWLRGKTADISEELDSIQKMHIESERIATEGALIELFRKNHIKPVFISLGLMFFQQFSGINAVIFYTVQIFKDSGSTVDENLSTIIVGLVNFISTFVAAMIIDRLGRKMLLYISSILMCITLFTFGTFFYVKELMDVTAFGWIPLMSLIVYVIGFSFGFGPIPWLMMGEILPVKIRGTAASVATAFNWSCTFVVTKTYEDLVLHIGPYGTFWLFGTLVAVAFIFVIICVPETRGRSLEEIERRFAGPVRRTSAIANLKPMPITI.

The Cytoplasmic segment spans residues 1–38 (MGVENTKQTMSSQNIKPAKDSDDVLHTQFKEVKRSPMR). A helical membrane pass occupies residues 39 to 59 (YTMQLLAALAVSMASLMIGYS). Residues 60-83 (SSYTSPALVSMRDNTTATFEVTMD) are Extracellular-facing. Residue asparagine 73 is glycosylated (N-linked (GlcNAc...) asparagine). A helical membrane pass occupies residues 84–104 (MAMWIGSIMPLSALIGGIIGG). The Cytoplasmic segment spans residues 105 to 120 (PCIEYIGRRNTILSTA). The helical transmembrane segment at 121–141 (LPFLAGWLFIALATNVAMILV) threads the bilayer. At 142–144 (GRS) the chain is on the extracellular side. Residues 145–165 (ICGFCVGVASLSLPVYLGESI) form a helical membrane-spanning segment. Topologically, residues 166–172 (QPEVRGS) are cytoplasmic. The chain crosses the membrane as a helical span at residues 173–193 (LGLLPTVFGNSGILMCFTAGM). At 194 to 199 (YLAWRN) the chain is on the extracellular side. A helical transmembrane segment spans residues 200-220 (LALLGACIPIIFLILMFLIPE). Topologically, residues 221–282 (TPRWYISKGK…ELFRKNHIKP (62 aa)) are cytoplasmic. Residues 283–303 (VFISLGLMFFQQFSGINAVIF) form a helical membrane-spanning segment. The Extracellular portion of the chain corresponds to 304 to 319 (YTVQIFKDSGSTVDEN). A glycan (N-linked (GlcNAc...) asparagine) is linked at asparagine 319. Residues 320-340 (LSTIIVGLVNFISTFVAAMII) traverse the membrane as a helical segment. The Cytoplasmic portion of the chain corresponds to 341–346 (DRLGRK). A helical membrane pass occupies residues 347-367 (MLLYISSILMCITLFTFGTFF). Residues 368 to 376 (YVKELMDVT) lie on the Extracellular side of the membrane. A helical transmembrane segment spans residues 377-397 (AFGWIPLMSLIVYVIGFSFGF). Topologically, residues 398-410 (GPIPWLMMGEILP) are cytoplasmic. A helical transmembrane segment spans residues 411–433 (VKIRGTAASVATAFNWSCTFVVT). Topologically, residues 434-446 (KTYEDLVLHIGPY) are extracellular. A helical membrane pass occupies residues 447–467 (GTFWLFGTLVAVAFIFVIICV). The Cytoplasmic portion of the chain corresponds to 468–502 (PETRGRSLEEIERRFAGPVRRTSAIANLKPMPITI).

It belongs to the major facilitator superfamily. Sugar transporter (TC 2.A.1.1) family. Trehalose transporter subfamily.

It is found in the cell membrane. Its function is as follows. Moderate-capacity facilitative transporter for trehalose. Does not transport maltose, sucrose or lactose. Mediates the bidirectional transfer of trehalose. Responsible for the transport of trehalose synthesized in the fat body and the incorporation of trehalose into other tissues that require a carbon source, thereby regulating trehalose levels in the hemolymph. This Apis mellifera ligustica (Common honeybee) protein is Facilitated trehalose transporter Tret1.